A 233-amino-acid chain; its full sequence is ATP synthase subunit C lysine N-methyltransferase (233 aa).

At methionine 1 the chain carries N-acetylmethionine. The helical transmembrane segment at 38–58 (FLLTGLVGGTLVAVYAVATPF) threads the bilayer. Positions 56-90 (TPFVTPALRKVCLPFVPATTKQIENVVKMLRCRRG) are required for mitochondrial location.

Belongs to the ANT/ATPSC lysine N-methyltransferase family. As to expression, ubiquitously expressed.

The protein localises to the mitochondrion membrane. It catalyses the reaction L-lysyl-[protein] + 3 S-adenosyl-L-methionine = N(6),N(6),N(6)-trimethyl-L-lysyl-[protein] + 3 S-adenosyl-L-homocysteine + 3 H(+). Functionally, mitochondrial protein-lysine N-methyltransferase that trimethylates ATP synthase subunit C, ATP5MC1 and ATP5MC2. Trimethylation is required for proper incorporation of the C subunit into the ATP synthase complex and mitochondrial respiration. Promotes chronic pain. Involved in persistent inflammatory and neuropathic pain: methyltransferase activity in the mitochondria of sensory neurons promotes chronic pain via a pathway that depends on the production of reactive oxygen species (ROS) and on the engagement of spinal cord microglia. The sequence is that of ATP synthase subunit C lysine N-methyltransferase from Homo sapiens (Human).